Consider the following 324-residue polypeptide: uncharacterized protein (324 aa).

An HTH lysR-type domain is found at 6–63 (LKYRELKIISVIAASENISHAATVLGIAQANVSKYLADFESKVGLKVFDRTTRQLMLT). The H-T-H motif DNA-binding region spans 23-42 (ISHAATVLGIAQANVSKYLA).

It belongs to the LysR transcriptional regulatory family.

This is an uncharacterized protein from Escherichia coli (strain K12).